The sequence spans 218 residues: Superoxide dismutase [Mn] 2, mitochondrial (218 aa).

The transit peptide at 1-24 (MLQSTARTASKLVQPVAGVLAVRS) directs the protein to the mitochondrion. Residues His50, His98, Asp179, and His183 each coordinate Mn(2+).

This sequence belongs to the iron/manganese superoxide dismutase family. Homotetramer. Mn(2+) is required as a cofactor. Expressed in pharynx and rectum. Upon thermal stress, expressed in vulva, body wall muscles and hypodermis.

The protein resides in the mitochondrion. The catalysed reaction is 2 superoxide + 2 H(+) = H2O2 + O2. Destroys superoxide anion radicals which are normally produced within the cells and which are toxic to biological systems. This chain is Superoxide dismutase [Mn] 2, mitochondrial (sod-3), found in Caenorhabditis elegans.